Here is a 947-residue protein sequence, read N- to C-terminus: DEAD-box ATP-dependent RNA helicase 45 (947 aa).

A compositionally biased stretch (acidic residues) spans 1-14 (MEEEEVVVVVDEEE). Disordered stretches follow at residues 1–132 (MEEE…EDEI) and 159–221 (SMPA…EEFM). 2 stretches are compositionally biased toward basic and acidic residues: residues 15 to 31 (SERR…KRLD) and 42 to 61 (KEWQ…REQE). The span at 62–82 (AAAGAGTPAAAAGADGDSNAG) shows a compositional bias: low complexity. Composition is skewed to acidic residues over residues 88–108 (DGEE…EDDG) and 196–219 (DDSD…DDEE). A Q motif motif is present at residues 285–313 (KTWVQSGLTSKLLDTIKKLGFEKPMPIQA). Residues 316–494 (LPIIMSGRDC…RKVLTKPVEI (179 aa)) enclose the Helicase ATP-binding domain. 329 to 336 (AKTGSGKT) serves as a coordination point for ATP. Positions 442-445 (DEAD) match the DEAD box motif. The Helicase C-terminal domain occupies 479-647 (QVEILARKVL…AVPQDLKGLA (169 aa)). Residues 658–710 (TEQAHGTGYGGSGFKFNEEEDEARRSAKKAQAREYGYEEDKSDSDSDEEGGVR) are disordered. Residues 697–706 (DKSDSDSDEE) are compositionally biased toward acidic residues. Positions 854 to 879 (TELSVKKAKSELKRVLEDCANHALNL) form a coiled coil.

It belongs to the DEAD box helicase family. DDX46/PRP5 subfamily.

It catalyses the reaction ATP + H2O = ADP + phosphate + H(+). The sequence is that of DEAD-box ATP-dependent RNA helicase 45 from Oryza sativa subsp. japonica (Rice).